Reading from the N-terminus, the 283-residue chain is Circadian clock oscillator protein KaiA (283 aa).

Positions 3–133 (QSTALTICGL…VKLCPGCAVP (131 aa)) are psR domain, binds oxidized quinones. Positions 3-163 (QSTALTICGL…RLSQKLKERL (161 aa)) constitute a KaiA N-terminal domain. The interval 164–172 (GYLGVYYKR) is flexible linker. Residues 173-281 (DTAFFFRRMS…CEMYRRSIPR (109 aa)) enclose the KaiA C-terminal domain.

Homodimer. The KaiABC complex composition changes during the circadian cycle to control KaiC phosphorylation. Complexes KaiC(6), KaiA(2-4):KaiC(6), KaiB(6):KaiC(6) and KaiC(6):KaiB(6):KaiA(12) are among the most important forms, many form cooperatively. KaiA and CikA bind to the same region of the KaiB(fs) form and therefore compete.

Key component of the KaiABC oscillator complex, which constitutes the main circadian regulator in cyanobacteria. Complex composition changes during the circadian cycle to control KaiC phosphorylation. KaiA stimulates KaiC autophosphorylation, while KaiB sequesters KaiA, leading to KaiC autodephosphorylation. KaiA binding to the KaiC CII domain during the subjective day yields KaiA(2-4):KaiC(6) complexes which stimulate KaiC autophosphorylation. Phospho-Ser-431 KaiC accumulation triggers binding of KaiB during the subjective night to form the KaiB(6):KaiC(6) complex, leading to changes in the output regulators CikA and SasA. KaiB(6):KaiC(6) formation exposes a site for KaiA binding on KaiB that sequesters KaiA from KaiC's CII domain, making the KaiC(6):KaiB(6):KaiA(12) complex resulting in KaiC autodephosphorylation. Complete dephosphorylation of KaiC leads to dissociation of KaiA(2):KaiB(1), completing 1 cycle of the Kai oscillator. Functionally, binds oxidized quinones via the N-terminal PsR domain, allowing it to sense redox changes and possibly mediate clock input. This is Circadian clock oscillator protein KaiA from Thermostichus vulcanus (Synechococcus vulcanus).